A 908-amino-acid chain; its full sequence is Isoleucine--tRNA ligase (908 aa).

A 'HIGH' region motif is present at residues 59 to 69 (PYANGDLHIGH). L-isoleucyl-5'-AMP is bound at residue E554. Positions 595–599 (KMSKS) match the 'KMSKS' region motif. K598 is a binding site for ATP. C882, C885, C898, and C901 together coordinate Zn(2+).

This sequence belongs to the class-I aminoacyl-tRNA synthetase family. IleS type 1 subfamily. Monomer. Zn(2+) is required as a cofactor.

The protein localises to the cytoplasm. It catalyses the reaction tRNA(Ile) + L-isoleucine + ATP = L-isoleucyl-tRNA(Ile) + AMP + diphosphate. In terms of biological role, catalyzes the attachment of isoleucine to tRNA(Ile). As IleRS can inadvertently accommodate and process structurally similar amino acids such as valine, to avoid such errors it has two additional distinct tRNA(Ile)-dependent editing activities. One activity is designated as 'pretransfer' editing and involves the hydrolysis of activated Val-AMP. The other activity is designated 'posttransfer' editing and involves deacylation of mischarged Val-tRNA(Ile). The chain is Isoleucine--tRNA ligase from Mesoplasma florum (strain ATCC 33453 / NBRC 100688 / NCTC 11704 / L1) (Acholeplasma florum).